We begin with the raw amino-acid sequence, 167 residues long: Small ribosomal subunit protein uS5 (167 aa).

The 64-residue stretch at Leu12–Ile75 folds into the S5 DRBM domain.

This sequence belongs to the universal ribosomal protein uS5 family. Part of the 30S ribosomal subunit. Contacts proteins S4 and S8.

With S4 and S12 plays an important role in translational accuracy. Its function is as follows. Located at the back of the 30S subunit body where it stabilizes the conformation of the head with respect to the body. The polypeptide is Small ribosomal subunit protein uS5 (Vibrio vulnificus (strain CMCP6)).